A 464-amino-acid chain; its full sequence is NADH-quinone oxidoreductase subunit N (464 aa).

A run of 14 helical transmembrane segments spans residues 6–26, 36–56, 75–95, 101–121, 123–143, 157–177, 197–217, 231–253, 257–279, 293–313, 317–337, 360–380, 395–415, and 439–459; these read FLYIVPEITVLGSALALLVLG, SMSLISVAIAAVLACKELIYF, CLARAVVAVSGLFAFLLFFFA, YEFAVLMLFAFLGTLTLVEAH, FLSFYLSFELIGFASYILVCF, FFVLGALSSCIMLYGISLVYG, LGATFGCALVLVGLLFKLGAV, PTVAVVFFTIVTKTAMVLVFAGL, VVIPITGFVWSMLLMAALSMVVG, FAYANIGHIGYVLAGMSTGVV, PVLFYVVTYLLINVWIFTVLL, AFTFVAALLASAGLPPFSGFF, FGVPTLVCVVFLCLTSIIPCF, and NVGLSIMAFVAVTLSLVVVLL.

This sequence belongs to the complex I subunit 2 family. NDH-1 is composed of 14 different subunits. Subunits NuoA, H, J, K, L, M, N constitute the membrane sector of the complex.

Its subcellular location is the cell inner membrane. It catalyses the reaction a quinone + NADH + 5 H(+)(in) = a quinol + NAD(+) + 4 H(+)(out). In terms of biological role, NDH-1 shuttles electrons from NADH, via FMN and iron-sulfur (Fe-S) centers, to quinones in the respiratory chain. The immediate electron acceptor for the enzyme in this species is believed to be ubiquinone. Couples the redox reaction to proton translocation (for every two electrons transferred, four hydrogen ions are translocated across the cytoplasmic membrane), and thus conserves the redox energy in a proton gradient. In Anaplasma phagocytophilum (strain HZ), this protein is NADH-quinone oxidoreductase subunit N.